The chain runs to 406 residues: Argininosuccinate synthase (406 aa).

Position 8–16 (8–16) interacts with ATP; the sequence is AYSGGLDTT. L-citrulline is bound by residues Tyr86 and Ser91. Gly116 contacts ATP. L-aspartate is bound by residues Thr118, Asn122, and Asp123. Asn122 is an L-citrulline binding site. 5 residues coordinate L-citrulline: Arg126, Ser175, Ser184, Glu261, and Tyr273.

It belongs to the argininosuccinate synthase family. Type 1 subfamily. Homotetramer.

It localises to the cytoplasm. It carries out the reaction L-citrulline + L-aspartate + ATP = 2-(N(omega)-L-arginino)succinate + AMP + diphosphate + H(+). It participates in amino-acid biosynthesis; L-arginine biosynthesis; L-arginine from L-ornithine and carbamoyl phosphate: step 2/3. This chain is Argininosuccinate synthase, found in Brachyspira hyodysenteriae (strain ATCC 49526 / WA1).